Here is a 135-residue protein sequence, read N- to C-terminus: Large ribosomal subunit protein uL16c (135 aa).

This sequence belongs to the universal ribosomal protein uL16 family. As to quaternary structure, part of the 50S ribosomal subunit.

It is found in the plastid. Its subcellular location is the chloroplast. In Acorus calamus var. americanus (American sweet flag), this protein is Large ribosomal subunit protein uL16c.